Here is a 158-residue protein sequence, read N- to C-terminus: Lipoprotein signal peptidase (158 aa).

The next 3 helical transmembrane spans lie at 4-24, 63-83, and 88-108; these read KYYITISLIVAIAILIIDQVT, KMGFFYIITIVILIVLVLFYI, and YNLFMQVAISLLFAGALGNFI. Residues Asp118 and Asp136 contribute to the active site. Residues 131–151 form a helical membrane-spanning segment; sequence IFNVADSSLTIGVLFIIIALL.

The protein belongs to the peptidase A8 family.

The protein resides in the cell membrane. The enzyme catalyses Release of signal peptides from bacterial membrane prolipoproteins. Hydrolyzes -Xaa-Yaa-Zaa-|-(S,diacylglyceryl)Cys-, in which Xaa is hydrophobic (preferably Leu), and Yaa (Ala or Ser) and Zaa (Gly or Ala) have small, neutral side chains.. It functions in the pathway protein modification; lipoprotein biosynthesis (signal peptide cleavage). Functionally, this protein specifically catalyzes the removal of signal peptides from prolipoproteins. This Staphylococcus haemolyticus (strain JCSC1435) protein is Lipoprotein signal peptidase.